Consider the following 173-residue polypeptide: Co-chaperone protein HscB homolog (173 aa).

The region spanning 5–77 (CHFALFDLQP…PRRARYLLAI (73 aa)) is the J domain.

This sequence belongs to the HscB family. In terms of assembly, interacts with HscA and stimulates its ATPase activity.

In terms of biological role, co-chaperone involved in the maturation of iron-sulfur cluster-containing proteins. Seems to help targeting proteins to be folded toward HscA. In Pseudomonas putida (strain W619), this protein is Co-chaperone protein HscB homolog.